Here is a 506-residue protein sequence, read N- to C-terminus: Allantoinase (506 aa).

Zn(2+) contacts are provided by histidine 105, histidine 107, lysine 195, histidine 231, histidine 292, and aspartate 366. Lysine 195 carries the post-translational modification N6-carboxylysine.

Belongs to the metallo-dependent hydrolases superfamily. Allantoinase family. Homotetramer. The cofactor is Zn(2+). Post-translationally, carboxylation allows a single lysine to coordinate two zinc ions.

The enzyme catalyses (S)-allantoin + H2O = allantoate + H(+). Its pathway is nitrogen metabolism; (S)-allantoin degradation; allantoate from (S)-allantoin: step 1/1. Its function is as follows. Catalyzes the conversion of allantoin (5-ureidohydantoin) to allantoate by hydrolytic cleavage of the five-member hydantoin ring. Catalyzes the first step of the ureide allantoin degradation followed by the sequential activity of AAH, UGLYAH and UAH which allows a complete purine breakdown without the intermediate generation of urea. The chain is Allantoinase (ALN) from Arabidopsis thaliana (Mouse-ear cress).